The primary structure comprises 1863 residues: Breast cancer type 1 susceptibility protein homolog (1863 aa).

M1 carries the post-translational modification N-acetylmethionine. The RING-type zinc-finger motif lies at 24–65 (CPICLELIKEPVSTKCDHIFCKFCMLKLLNQKKGPSQCPLCK). A Glycyl lysine isopeptide (Lys-Gly) (interchain with G-Cter in SUMO2) cross-link involves residue K109. S114 carries the post-translational modification Phosphoserine. The segment at 230–267 (ETDVTNTEHHQPSNNDLNTTEKRATERHPEKYQGSSVS) is disordered. Residues 248-260 (TTEKRATERHPEK) show a composition bias toward basic and acidic residues. K301 participates in a covalent cross-link: Glycyl lysine isopeptide (Lys-Gly) (interchain with G-Cter in SUMO2). Residues 306–338 (NKSKQPGLARSQHNRWAGSKETCNDRRTPSTEK) are disordered. The segment covering 327–338 (TCNDRRTPSTEK) has biased composition (basic and acidic residues). K339 participates in a covalent cross-link: Glycyl lysine isopeptide (Lys-Gly) (interchain with G-Cter in SUMO2). 4 positions are modified to phosphoserine: S395, S398, S423, and S434. Residues K443, K459, and K519 each participate in a glycyl lysine isopeptide (Lys-Gly) (interchain with G-Cter in SUMO2) cross-link. At S551 the chain carries Phosphoserine. Glycyl lysine isopeptide (Lys-Gly) (interchain with G-Cter in SUMO2) cross-links involve residues K583 and K654. A disordered region spans residues 650-739 (IKKKKYNQMP…EKEEKLETVK (90 aa)). Phosphoserine is present on residues S694, S708, and S725. The segment covering 705–716 (APGSFTNCSNTS) has biased composition (polar residues). Residues 727–737 (PREEKEEKLET) are compositionally biased toward basic and acidic residues. Glycyl lysine isopeptide (Lys-Gly) (interchain with G-Cter in SUMO2) cross-links involve residues K734 and K739. A phosphoserine mark is found at S753 and S840. Positions 896 to 915 (SPKVTFEREQKEQNQGKNES) are disordered. Basic and acidic residues predominate over residues 900 to 909 (TFEREQKEQN). Residues K918 and K987 each participate in a glycyl lysine isopeptide (Lys-Gly) (interchain with G-Cter in SUMO2) cross-link. S988 carries the post-translational modification Phosphoserine; by CHEK2. The residue at position 1009 (S1009) is a Phosphoserine. K1079 is covalently cross-linked (Glycyl lysine isopeptide (Lys-Gly) (interchain with G-Cter in SUMO2)). Residues S1143, S1189, S1191, S1211, S1217, S1218, S1280, S1328, S1336, S1342, and S1387 each carry the phosphoserine modification. Residues 1181–1216 (VQRGELSRSPSPFTHTHLAQGYRRGAKKLESSEENL) are disordered. Residues 1322 to 1395 (KQMRHQSESQ…SSQSDILTTQ (74 aa)) form a disordered region. Residues 1373-1395 (ESETSVSEDCSGLSSQSDILTTQ) show a composition bias toward polar residues. T1394 bears the Phosphothreonine mark. The interval 1397–1424 (RDTMQDNLIKLQQEMAELEAVLEQHGSQ) is interaction with PALB2. Phosphoserine occurs at positions 1423, 1457, 1524, and 1542. Residues 1440 to 1505 (EDLQNPEQST…SSPSKCPSLD (66 aa)) form a disordered region. Over residues 1444 to 1470 (NPEQSTSEKAVLTSQKSSEYPISQNPE) the composition is skewed to polar residues. The tract at residues 1565 to 1642 (ESGISLFSDD…SREKPELTAS (78 aa)) is disordered. Polar residues predominate over residues 1610 to 1624 (SAQSPAAAHTTNTAG). BRCT domains are found at residues 1642–1736 (STER…DFEV) and 1756–1855 (QDRK…TYLI).

As to quaternary structure, heterodimer with BARD1. Part of the BRCA1-associated genome surveillance complex (BASC), which contains BRCA1, MSH2, MSH6, MLH1, ATM, BLM, PMS2 and the MRE11-RAD50-NBN protein (MRN) complex. This association could be a dynamic process changing throughout the cell cycle and within subnuclear domains. Component of the BRCA1-A complex, at least composed of BRCA1, BARD1, UIMC1/RAP80, ABRAXAS1, BRCC3/BRCC36, BABAM2 and BABAM1/NBA1. Interacts (via the BRCT domains) with ABRAXAS1 (phosphorylated form); this is important for recruitment to sites of DNA damage. Can form a heterotetramer with two molecules of ABRAXAS1 (phosphorylated form). Component of the BRCA1-RBBP8 complex. Interacts (via the BRCT domains) with RBBP8 ('Ser-327' phosphorylated form); the interaction ubiquitinates RBBP8, regulates CHEK1 activation, and involves RBBP8 in BRCA1-dependent G2/M checkpoint control on DNA damage. Associates with RNA polymerase II holoenzyme. Interacts with SMC1A, NELFB, DCLRE1C, CLSPN. CHEK1, CHEK2, BAP1, BRCC3, UBXN1 and PCLAF. Interacts (via BRCT domains) with BRIP1 (phosphorylated form). Interacts with FANCD2 (ubiquitinated form). Interacts with H2AX (phosphorylated on 'Ser-140'). Interacts (via the BRCT domains) with ACACA (phosphorylated form); the interaction prevents dephosphorylation of ACACA. Part of a BRCA complex containing BRCA1, BRCA2 and PALB2. Interacts directly with PALB2; the interaction is essential for its function in HRR. Interacts directly with BRCA2; the interaction occurs only in the presence of PALB2 which serves as the bridging protein. Interacts (via the BRCT domains) with LMO4; the interaction represses the transcriptional activity of BRCA1. Interacts (via the BRCT domains) with CCAR2 (via N-terminus); the interaction represses the transcriptional activator activity of BRCA1. Interacts with EXD2. Interacts (via C-terminus) with DHX9; this interaction is direct and links BRCA1 to the RNA polymerase II holoenzyme. Interacts with DNA helicase ZGRF1; the interaction is increased following DNA damage induction. Phosphorylated in response to IR, UV, and various stimuli that cause checkpoint activation, probably by ATM or ATR. Phosphorylation at Ser-988 by CHEK2 regulates mitotic spindle assembly. Phosphorylation by AURKA regulates centrosomal microtubule nucleation. In terms of processing, autoubiquitinated, undergoes 'Lys-6'-linked polyubiquitination. 'Lys-6'-linked polyubiquitination does not promote degradation.

It is found in the nucleus. The protein resides in the chromosome. The protein localises to the cytoplasm. It carries out the reaction S-ubiquitinyl-[E2 ubiquitin-conjugating enzyme]-L-cysteine + [acceptor protein]-L-lysine = [E2 ubiquitin-conjugating enzyme]-L-cysteine + N(6)-ubiquitinyl-[acceptor protein]-L-lysine.. Functionally, E3 ubiquitin-protein ligase that specifically mediates the formation of 'Lys-6'-linked polyubiquitin chains and plays a central role in DNA repair by facilitating cellular responses to DNA damage. It is unclear whether it also mediates the formation of other types of polyubiquitin chains. The BRCA1-BARD1 heterodimer coordinates a diverse range of cellular pathways such as DNA damage repair, ubiquitination and transcriptional regulation to maintain genomic stability. Regulates centrosomal microtubule nucleation. Required for appropriate cell cycle arrests after ionizing irradiation in both the S-phase and the G2 phase of the cell cycle. Required for FANCD2 targeting to sites of DNA damage. Inhibits lipid synthesis by binding to inactive phosphorylated ACACA and preventing its dephosphorylation. Contributes to homologous recombination repair (HRR) via its direct interaction with PALB2, fine-tunes recombinational repair partly through its modulatory role in the PALB2-dependent loading of BRCA2-RAD51 repair machinery at DNA breaks. Component of the BRCA1-RBBP8 complex which regulates CHEK1 activation and controls cell cycle G2/M checkpoints on DNA damage via BRCA1-mediated ubiquitination of RBBP8. Acts as a transcriptional activator. This is Breast cancer type 1 susceptibility protein homolog (BRCA1) from Pan troglodytes (Chimpanzee).